A 598-amino-acid polypeptide reads, in one-letter code: Fumarate reductase flavoprotein subunit (598 aa).

Residues 12–16 (GAGGA), 36–38 (ISK), 44–52 (SHTVAAEGG), 156–158 (HFV), and aspartate 212 contribute to the FAD site. Tele-8alpha-FAD histidine is present on histidine 45. Catalysis depends on residues histidine 233 and arginine 249. FAD contacts are provided by residues 356 to 357 (HY), glutamate 380, and 391 to 397 (RLGSNSL). A disordered region spans residues 577 to 598 (AKRVYGGEATAQDKQNKEKANG).

It belongs to the FAD-dependent oxidoreductase 2 family. FRD/SDH subfamily. As to quaternary structure, part of an enzyme complex containing four subunits: a flavoprotein (FrdA), an iron-sulfur protein (FrdB), and two hydrophobic anchor proteins (FrdC and FrdD). Requires FAD as cofactor.

The protein localises to the cell inner membrane. It catalyses the reaction a quinone + succinate = fumarate + a quinol. The enzyme catalyses a menaquinone + succinate = a menaquinol + fumarate. Its function is as follows. Two distinct, membrane-bound, FAD-containing enzymes are responsible for the catalysis of fumarate and succinate interconversion; the fumarate reductase is used in anaerobic growth, and the succinate dehydrogenase is used in aerobic growth. The chain is Fumarate reductase flavoprotein subunit (frdA) from Proteus vulgaris.